A 225-amino-acid polypeptide reads, in one-letter code: MDKRISIAIDGPAAAGKSTVAKVVAKELSYVYIDTGAMYRTLTYAALEQKVDIENEEQLMEVVKNVNIEFQQGENTQLVFLNGQDVSEVIRTPDVTNRVSIVAKHRLVREEMVRRQQELAKKGGVVMDGRDIGTHVLPDAEVKIFMLASVEERAERRHLENLNKGFDSNLEQLKEEIAQRDKLDSEREVSPLKKADDALELDTTSLSIEEVVQKIMSIVSGVFAK.

11–19 provides a ligand contact to ATP; that stretch reads GPAAAGKST.

This sequence belongs to the cytidylate kinase family. Type 1 subfamily.

It is found in the cytoplasm. It carries out the reaction CMP + ATP = CDP + ADP. The catalysed reaction is dCMP + ATP = dCDP + ADP. The chain is Cytidylate kinase from Bacillus cereus (strain B4264).